The chain runs to 302 residues: D-alanine--D-alanine ligase (302 aa).

In terms of domain architecture, ATP-grasp spans 100–295 (KTVFDHHGIL…FNELIAKLIE (196 aa)). Residue 126–180 (QDLEPPVFIKPNSGGSSLGMTFARTAEELEKGIETVFSLGDSALVEEYTKGIEVT) participates in ATP binding. Residues Asp-250, Glu-262, and Asn-264 each contribute to the Mg(2+) site.

It belongs to the D-alanine--D-alanine ligase family. Mg(2+) serves as cofactor. Requires Mn(2+) as cofactor.

It localises to the cytoplasm. It catalyses the reaction 2 D-alanine + ATP = D-alanyl-D-alanine + ADP + phosphate + H(+). It participates in cell wall biogenesis; peptidoglycan biosynthesis. In terms of biological role, cell wall formation. This Maridesulfovibrio salexigens (strain ATCC 14822 / DSM 2638 / NCIMB 8403 / VKM B-1763) (Desulfovibrio salexigens) protein is D-alanine--D-alanine ligase.